The chain runs to 546 residues: Chaperonin GroEL 6 (546 aa).

Residues 30–33 (TLGP), Lys51, 87–91 (DGTTT), Gly415, and Asp496 each bind ATP.

This sequence belongs to the chaperonin (HSP60) family. Forms a cylinder of 14 subunits composed of two heptameric rings stacked back-to-back. Interacts with the co-chaperonin GroES.

The protein localises to the cytoplasm. The catalysed reaction is ATP + H2O + a folded polypeptide = ADP + phosphate + an unfolded polypeptide.. Its function is as follows. Together with its co-chaperonin GroES, plays an essential role in assisting protein folding. The GroEL-GroES system forms a nano-cage that allows encapsulation of the non-native substrate proteins and provides a physical environment optimized to promote and accelerate protein folding. In Bradyrhizobium diazoefficiens (strain JCM 10833 / BCRC 13528 / IAM 13628 / NBRC 14792 / USDA 110), this protein is Chaperonin GroEL 6.